A 296-amino-acid polypeptide reads, in one-letter code: Tyrosine recombinase XerC (296 aa).

The Core-binding (CB) domain occupies 2-85 (ADQASWLERF…ALKQFGQFLL (84 aa)). The 180-residue stretch at 106-285 (TLPKNLDPDS…DFQHLAKVYD (180 aa)) folds into the Tyr recombinase domain. Residues R145, K169, H237, R240, and H263 contribute to the active site. Catalysis depends on Y272, which acts as the O-(3'-phospho-DNA)-tyrosine intermediate.

The protein belongs to the 'phage' integrase family. XerC subfamily. Forms a cyclic heterotetrameric complex composed of two molecules of XerC and two molecules of XerD.

Its subcellular location is the cytoplasm. Functionally, site-specific tyrosine recombinase, which acts by catalyzing the cutting and rejoining of the recombining DNA molecules. The XerC-XerD complex is essential to convert dimers of the bacterial chromosome into monomers to permit their segregation at cell division. It also contributes to the segregational stability of plasmids. This is Tyrosine recombinase XerC from Shewanella amazonensis (strain ATCC BAA-1098 / SB2B).